Reading from the N-terminus, the 384-residue chain is DNA dC-&gt;dU-editing enzyme APOBEC-3G (384 aa).

The essential for cytoplasmic localization stretch occupies residues 1–60 (MKPHFRNPVERMYQDTFSDNFYNRPILSRRNTVWLCYEVKTKGPSRPPLDAKIFRGQVYS). CMP/dCMP-type deaminase domains are found at residues 29 to 138 (RRNT…LRSL) and 214 to 328 (GRHE…LRTL). Threonine 32 is modified (phosphothreonine; by PKA). The Zn(2+) site is built by histidine 65, cysteine 97, and cysteine 100. The segment at 209-336 (ELWVRGRHET…TLAKAGAEIS (128 aa)) is necessary for homooligomerization. The tract at residues 213 to 215 (RGR) is interaction with DNA. The residue at position 218 (threonine 218) is a Phosphothreonine; by PKA and CAMK2. Histidine 257 contacts Zn(2+). Glutamate 259 (proton donor) is an active-site residue. Zn(2+)-binding residues include cysteine 288 and cysteine 291. Residues 313-320 (RIYDDQGR) form an interaction with DNA region.

The protein belongs to the cytidine and deoxycytidylate deaminase family. Homodimer. Homooligomer. Can bind RNA to form ribonucleoprotein complexes of high-molecular-mass (HMM) or low-molecular-mass (LMM). HMM is inactive and heterogeneous in protein composition because of binding nonselectively to cellular RNAs, which in turn are associated with variety of cellular proteins. The LMM form which is enzymatically active has few or no RNAs associated. Its ability to form homooligomer is distinct from its ability to assemble into HMM. Interacts with APOBEC3B, APOBEC3F, MOV10, AGO2, EIF4E, EIF4ENIF1, DCP2 and DDX6 in an RNA-dependent manner. Interacts with AGO1, AGO3 and PKA/PRKACA. Requires Zn(2+) as cofactor.

The protein resides in the cytoplasm. It is found in the nucleus. It localises to the P-body. The catalysed reaction is a 2'-deoxycytidine in single-stranded DNA + H2O + H(+) = a 2'-deoxyuridine in single-stranded DNA + NH4(+). Functionally, DNA deaminase (cytidine deaminase) which acts as an inhibitor of retrovirus replication and retrotransposon mobility via deaminase-dependent and -independent mechanisms. After the penetration of retroviral nucleocapsids into target cells of infection and the initiation of reverse transcription, it can induce the conversion of cytosine to uracil in the minus-sense single-strand viral DNA, leading to G-to-A hypermutations in the subsequent plus-strand viral DNA. The resultant detrimental levels of mutations in the proviral genome, along with a deamination-independent mechanism that works prior to the proviral integration, together exert efficient antiretroviral effects in infected target cells. Selectively targets single-stranded DNA and does not deaminate double-stranded DNA or single- or double-stranded RNA. May inhibit the mobility of LTR retrotransposons. This is DNA dC-&gt;dU-editing enzyme APOBEC-3G (APOBEC3G) from Pan paniscus (Pygmy chimpanzee).